Here is a 342-residue protein sequence, read N- to C-terminus: tRNA-specific 2-thiouridylase MnmA (342 aa).

Residues 6 to 13 (LLSGGVDS) and Leu32 contribute to the ATP site. The Nucleophile role is filled by Cys92. Cys92 and Cys191 are joined by a disulfide. ATP is bound at residue Gly116. The interval 138–140 (KDQ) is interaction with tRNA. Residue Cys191 is the Cysteine persulfide intermediate of the active site. Positions 293-294 (RY) are interaction with tRNA.

The protein belongs to the MnmA/TRMU family.

The protein localises to the cytoplasm. The enzyme catalyses S-sulfanyl-L-cysteinyl-[protein] + uridine(34) in tRNA + AH2 + ATP = 2-thiouridine(34) in tRNA + L-cysteinyl-[protein] + A + AMP + diphosphate + H(+). Functionally, catalyzes the 2-thiolation of uridine at the wobble position (U34) of tRNA, leading to the formation of s(2)U34. This is tRNA-specific 2-thiouridylase MnmA from Helicobacter acinonychis (strain Sheeba).